Reading from the N-terminus, the 264-residue chain is Thiamine pyrophosphokinase 1 (264 aa).

Residues 1–12 (MPLPTMTHSSSF) are compositionally biased toward polar residues. A disordered region spans residues 1–27 (MPLPTMTHSSSFLRLPATSSPHPPPAD).

This sequence belongs to the thiamine pyrophosphokinase family.

It localises to the cytoplasm. The protein resides in the cytosol. It carries out the reaction thiamine + ATP = thiamine diphosphate + AMP + H(+). It functions in the pathway cofactor biosynthesis; thiamine diphosphate biosynthesis; thiamine diphosphate from thiamine: step 1/1. Functionally, catalyzes the phosphorylation of thiamine to thiamine pyrophosphate (TPP). TPP is an active cofactor for enzymes involved in glycolysis and energy production. Plant leaves require high levels of TPP for photosynthesis and carbohydrate metabolism. The polypeptide is Thiamine pyrophosphokinase 1 (TPK1) (Oryza sativa subsp. japonica (Rice)).